Consider the following 219-residue polypeptide: Cytidylate kinase (219 aa).

ATP is bound at residue 21 to 29; that stretch reads GPAASGKGT.

It belongs to the cytidylate kinase family. Type 1 subfamily.

Its subcellular location is the cytoplasm. It carries out the reaction CMP + ATP = CDP + ADP. The enzyme catalyses dCMP + ATP = dCDP + ADP. This Rickettsia felis (strain ATCC VR-1525 / URRWXCal2) (Rickettsia azadi) protein is Cytidylate kinase.